Here is a 105-residue protein sequence, read N- to C-terminus: Large ribosomal subunit protein uL24 (105 aa).

The protein belongs to the universal ribosomal protein uL24 family. As to quaternary structure, part of the 50S ribosomal subunit.

One of two assembly initiator proteins, it binds directly to the 5'-end of the 23S rRNA, where it nucleates assembly of the 50S subunit. Its function is as follows. One of the proteins that surrounds the polypeptide exit tunnel on the outside of the subunit. This chain is Large ribosomal subunit protein uL24, found in Vibrio atlanticus (strain LGP32) (Vibrio splendidus (strain Mel32)).